Reading from the N-terminus, the 256-residue chain is MFSNIIEIIILSIVQGISEFLPISSSAHLNIVEIIFEFNSNSLMIDVSLHLGSLLAIVFYFRRELLDLRNNQKLLSLLIIGSIPIVIAGYVISSTGLVNLLENNLKIIAWTTLIFGIILYLADKSKFDKKISSNLNFKTILYIGLFQILALIPGVSRAGITITAARLFRFNRFDSSKISFLLAIPAIAGASVLQLKNAIGQSFELNYLVLISITLSFLFSYFTVKFFLDYINKFSLNVFVIYRIIISIILFIIIYN.

Transmembrane regions (helical) follow at residues 5 to 25, 41 to 61, 74 to 94, 100 to 120, 135 to 155, 180 to 200, 208 to 228, and 234 to 254; these read IIEI…PISS, NSLM…VFYF, LLSL…VISS, LLEN…IILY, LNFK…IPGV, FLLA…NAIG, LVLI…KFFL, and FSLN…FIII.

This sequence belongs to the UppP family.

It localises to the cell inner membrane. It carries out the reaction di-trans,octa-cis-undecaprenyl diphosphate + H2O = di-trans,octa-cis-undecaprenyl phosphate + phosphate + H(+). In terms of biological role, catalyzes the dephosphorylation of undecaprenyl diphosphate (UPP). Confers resistance to bacitracin. In Pelagibacter ubique (strain HTCC1062), this protein is Undecaprenyl-diphosphatase.